Reading from the N-terminus, the 63-residue chain is Short neurotoxin 2 (63 aa).

4 disulfide bridges follow: Cys3/Cys21, Cys15/Cys39, Cys43/Cys49, and Cys50/Cys55.

Belongs to the three-finger toxin family. Short-chain subfamily. Orphan group XVIII sub-subfamily. As to expression, expressed by the venom gland.

It localises to the secreted. Its function is as follows. Blocks both the muscle-twitch response to nerve stimulation and the response to exogenous acetylcholine. The chain is Short neurotoxin 2 from Bungarus fasciatus (Banded krait).